We begin with the raw amino-acid sequence, 232 residues long: Thiamine import ATP-binding protein ThiQ (232 aa).

One can recognise an ABC transporter domain in the interval 2-230 (LKLTDITWLY…KASASALLGI (229 aa)). 32 to 39 (GPSGAGKS) lines the ATP pocket.

Belongs to the ABC transporter superfamily. Thiamine importer (TC 3.A.1.19.1) family. The complex is composed of two ATP-binding proteins (ThiQ), two transmembrane proteins (ThiP) and a solute-binding protein (ThiB).

Its subcellular location is the cell inner membrane. It catalyses the reaction thiamine(out) + ATP + H2O = thiamine(in) + ADP + phosphate + H(+). Part of the ABC transporter complex ThiBPQ involved in thiamine import. Responsible for energy coupling to the transport system. The chain is Thiamine import ATP-binding protein ThiQ from Escherichia coli (strain K12).